The sequence spans 464 residues: tRNA modification GTPase MnmE (464 aa).

Residues Arg-27, Glu-90, and Lys-129 each coordinate (6S)-5-formyl-5,6,7,8-tetrahydrofolate. Residues Gly-222–Cys-384 enclose the TrmE-type G domain. GTP-binding positions include Asn-232 to Ser-237, Ser-251 to Thr-257, and Asp-276 to Gly-279. Positions 236 and 257 each coordinate Mg(2+). Lys-464 is a (6S)-5-formyl-5,6,7,8-tetrahydrofolate binding site.

Belongs to the TRAFAC class TrmE-Era-EngA-EngB-Septin-like GTPase superfamily. TrmE GTPase family. Homodimer. Heterotetramer of two MnmE and two MnmG subunits. K(+) is required as a cofactor.

It is found in the cytoplasm. Functionally, exhibits a very high intrinsic GTPase hydrolysis rate. Involved in the addition of a carboxymethylaminomethyl (cmnm) group at the wobble position (U34) of certain tRNAs, forming tRNA-cmnm(5)s(2)U34. The protein is tRNA modification GTPase MnmE of Borrelia turicatae (strain 91E135).